A 183-amino-acid polypeptide reads, in one-letter code: Ras-related protein Rap-2a (183 aa).

A GTP-binding site is contributed by 10 to 17 (GSGGVGKS). The Effector region motif lies at 32-40 (YDPTIEDFY). T35 carries (Microbial infection) O-linked (Glc) threonine; by C.difficile toxin TcdA, and by P.sordellii toxin TcsL glycosylation. Residues 57–61 (DTAGT) and 116–119 (NKVD) contribute to the GTP site. Residues C176 and C177 are each lipidated (S-palmitoyl cysteine). Position 180 is a cysteine methyl ester (C180). Residue C180 is the site of S-farnesyl cysteine attachment. Residues 181-183 (NIQ) constitute a propeptide, removed in mature form.

The protein belongs to the small GTPase superfamily. Ras family. In terms of assembly, interacts (GTP-bound form) with RUNDC3A. Interacts with RGS14; the interaction is GTP-dependent. Interacts with PLCE1. Interacts with ARHGAP29, SGSM1, SGSM2 and SGSM3. Interacts (GTP-bound form preferentially) with TNIK (via the CNH domain); the interaction is direct and recruits RAP2A to the E3 ubiquitin ligase NEDD4. Interacts with MINK1. Interacts (GTP-bound form preferentially) with MAP4K4. Interacts with cytoskeletal actin. Ubiquitinated; undergoes 'Lys-63' monoubiquitination and diubiquitination by NEDD4. Multiple lysine residues are probably modified. Ubiquitination requires TNIK, prevents interaction with effectors and inactivates RAP2A. Ubiquitination by the ECS(RAB40B) complex leads to RAP2A localization to lamellipodia plasma membrane, activation, and regulation of sorting at early endosomes for recycling to the lamellipodia plasma membrane. Post-translationally, palmitoylated. Palmitoylation is required for association with recycling endosome membranes and activation of TNIK. In terms of processing, (Microbial infection) Glucosylated at Thr-35 by C.difficile toxin TcdA in the colonic epithelium, and by P.sordellii toxin TcsL in the vascular endothelium.

Its subcellular location is the midbody. The protein resides in the cell projection. It localises to the lamellipodium membrane. The protein localises to the golgi apparatus. It is found in the recycling endosome membrane. Its subcellular location is the lysosome. It catalyses the reaction GTP + H2O = GDP + phosphate + H(+). Activated by the guanine nucleotide-exchange factors RAPGEF3 and RAPGEF4 in a cAMP-dependent manner. Nucleotide exchange is also specifically stimulated by RAPGEF5, RASGEF1A and RASGEF1B. Functionally, small GTP-binding protein which cycles between a GDP-bound inactive and a GTP-bound active form. In its active form interacts with and regulates several effectors including MAP4K4, MINK1 and TNIK. Part of a signaling complex composed of NEDD4, RAP2A and TNIK which regulates neuronal dendrite extension and arborization during development. More generally, it is part of several signaling cascades and regulates cytoskeletal rearrangements, cell migration, cell adhesion and cell spreading. This is Ras-related protein Rap-2a from Homo sapiens (Human).